The chain runs to 315 residues: tRNA dimethylallyltransferase (315 aa).

Residue 10-17 (GPTASGKS) participates in ATP binding. 12–17 (TASGKS) lines the substrate pocket. Positions 35-38 (DSMQ) are interaction with substrate tRNA.

This sequence belongs to the IPP transferase family. Monomer. Mg(2+) is required as a cofactor.

The catalysed reaction is adenosine(37) in tRNA + dimethylallyl diphosphate = N(6)-dimethylallyladenosine(37) in tRNA + diphosphate. Its function is as follows. Catalyzes the transfer of a dimethylallyl group onto the adenine at position 37 in tRNAs that read codons beginning with uridine, leading to the formation of N6-(dimethylallyl)adenosine (i(6)A). This chain is tRNA dimethylallyltransferase, found in Thermoanaerobacter pseudethanolicus (strain ATCC 33223 / 39E) (Clostridium thermohydrosulfuricum).